The following is a 634-amino-acid chain: Putative lipase atg15 (634 aa).

Residues 1 to 4 are Cytoplasmic-facing; the sequence is MSIS. Residues 5–25 traverse the membrane as a helical; Signal-anchor for type II membrane protein segment; that stretch reads GLLLSVALLPSVVSAHDHVYF. Residues 26 to 634 lie on the Lumenal side of the membrane; it reads DPPSSGSPFL…CVGSTGTELR (609 aa). N-linked (GlcNAc...) asparagine glycans are attached at residues N150, N185, N207, N265, and N289. The active-site Charge relay system is the S305. N451 carries N-linked (GlcNAc...) asparagine glycosylation. The tract at residues 518–544 is disordered; it reads PTTTTEATPAPSVTTTIPTPTTYPTSS.

It belongs to the AB hydrolase superfamily. Lipase family. As to quaternary structure, binds to both phosphatidylinositol (PI) and phosphatidylinositol 3,5-bisphosphate (PIP2).

Its subcellular location is the endosome. It is found in the multivesicular body membrane. The protein resides in the prevacuolar compartment membrane. It carries out the reaction a triacylglycerol + H2O = a diacylglycerol + a fatty acid + H(+). Its function is as follows. Lipase which is essential for lysis of subvacuolar cytoplasm to vacuole targeted bodies and intravacuolar autophagic bodies. Involved in the lysis of intravacuolar multivesicular body (MVB) vesicles. The intravacuolar membrane disintegration by atg15 is critical to life span extension. This Neosartorya fischeri (strain ATCC 1020 / DSM 3700 / CBS 544.65 / FGSC A1164 / JCM 1740 / NRRL 181 / WB 181) (Aspergillus fischerianus) protein is Putative lipase atg15 (atg15).